The primary structure comprises 31 residues: U14-ctenitoxin-Co1a (31 aa).

In terms of processing, disulfide bonds are present. Expressed by the venom gland.

The protein localises to the secreted. Omega-agatoxins are antagonists of voltage-gated calcium channels (Cav). In Ctenus ornatus (Brazilian spider), this protein is U14-ctenitoxin-Co1a.